Here is a 480-residue protein sequence, read N- to C-terminus: UDP-glycosyltransferase 72B2 (480 aa).

UDP-alpha-D-glucose-binding positions include Ser277, 347–349 (APQ), 364–372 (HCGWNSTLE), and 386–389 (FAEQ).

Belongs to the UDP-glycosyltransferase family.

The sequence is that of UDP-glycosyltransferase 72B2 (UGT72B2) from Arabidopsis thaliana (Mouse-ear cress).